The following is a 446-amino-acid chain: Histidine--tRNA ligase (446 aa).

It belongs to the class-II aminoacyl-tRNA synthetase family. Homodimer.

The protein resides in the cytoplasm. The catalysed reaction is tRNA(His) + L-histidine + ATP = L-histidyl-tRNA(His) + AMP + diphosphate + H(+). This Paraburkholderia phytofirmans (strain DSM 17436 / LMG 22146 / PsJN) (Burkholderia phytofirmans) protein is Histidine--tRNA ligase.